The sequence spans 476 residues: Calcium uptake protein 1, mitochondrial (476 aa).

A mitochondrion-targeting transit peptide spans 1–33 (MFRLNSLSALAELAVGSRWYHGGSQPIQIRRRL). Residues 68–106 (SDIGDKGKNKDEGDVCNHEKKTADLAPHPEEKKKKRSGF) form a disordered region. The segment at 99-110 (KKKKRSGFRDRK) is polybasic region. Residue serine 122 is modified to Phosphoserine. The tract at residues 126–129 (KIFR) is k/R-ring. One can recognise an EF-hand 1 domain in the interval 218–253 (TPQRNFEIAFKMFDLNGDGEVDMEEFEQVQSIIRSQ). Ca(2+) is bound by residues aspartate 231, asparagine 233, aspartate 235, glutamate 237, and glutamate 242. Positions 259–263 (RHRDR) are k/R-ring. The EF-hand 2 domain maps to 408–443 (LSDHVCDVVFALFDCDGNGELSNKEFVSIMKQRLMR). Residues aspartate 421, aspartate 423, asparagine 425, glutamate 427, and glutamate 432 each coordinate Ca(2+). Asymmetric dimethylarginine is present on arginine 455. Positions 455–465 (RLMQAMWKCAQ) are C-helix region.

The protein belongs to the MICU1 family. MICU1 subfamily. Heterodimer; disulfide-linked; heterodimerizes with MICU2 or MICU3. Homodimer; disulfide-linked. Component of the uniplex complex, composed of MCU, EMRE/SMDT1, MICU1 and MICU2 (or MICU3) in a 4:4:1:1 stoichiometry. The composition of calcium sensors within the uniplex complex can differ depending on tissues: a MICU1 homodimer can be present instead of the MICU1-MICU2 heterodimer in skeletal-muscle and kidney. MICU1 is recruited to the uniplex complex by EMRE/SMDT1, and it associates with MCU at low calcium levels, occluding the pore of the MCU channel. Associates with the MICOS complex. Interacts with SLC25A23. Interacts with CHCHD4/MIA40; which introduces the interchain disulfide bond with MICU2. Interacts (when methylated) with UCP2; leading to decrease the calcium sensitivity of MICU1. In terms of processing, phosphorylation at Ser-122 by AKT1 impairs its maturation and stability. Asymmetric dimethylation at Arg-455 by PRMT1 decreases the calcium sensitivity of MICU1 by promoting interaction with UCP2. Post-translationally, degraded by YME1L1 when not complexed as homodimer or heterodimer. Not degraded when complexed as homodimer or heterodimer; the presence of the interchain disulfide bond protecting MICU1 from degradation by YME1L1. As to expression, expressed in epithelial cell lines. Strongly expressed in epidermal keratinocytes and dermal endothelial cells.

The protein localises to the mitochondrion intermembrane space. It is found in the mitochondrion inner membrane. Activated by spermine, kaempferol and SB202190, which bind MICU1 and prevent MCU pore occlusion in absence of calcium. Calcium sensor of the mitochondrial calcium uniporter (MCU) channel, which senses calcium level via its EF-hand domains. MICU1 and MICU2 (or MICU3) form a disulfide-linked heterodimer that stimulates and inhibits MCU activity, depending on the concentration of calcium. At low calcium levels, MICU1 occludes the pore of the MCU channel, preventing mitochondrial calcium uptake. At higher calcium levels, calcium-binding to MICU1 and MICU2 (or MICU3) induces a conformational change that weakens MCU-MICU1 interactions and moves the MICU1-MICU2 heterodimer away from the pore, allowing calcium permeation through the MCU channel. Also required to protect against manganese toxicity by preventing manganese uptake by MCU: mechanistically, manganese-binding to its EF-hand domains does not induce any conformational change, maintaining MCU pore occlusion. Also acts as a barrier for inhibitors of the MCU channel, such as ruthenium red or its derivative Ru360. Acts as a regulator of mitochondrial cristae structure independently of its ability to regulate the mitochondrial calcium uniporter channel. Regulates glucose-dependent insulin secretion in pancreatic beta-cells by regulating mitochondrial calcium uptake. Induces T-helper 1-mediated autoreactivity, which is accompanied by the release of IFNG. Its function is as follows. Isoform that regulates mitochondrial calcium uniporter (MCU) in the skeletal muscle. Compared to other isoforms, this isoform has higher affinity for calcium, promoting mitochondrial calcium uptake at lower calcium concentrations. This allows a rapid response of mitochondrial metabolism and ensures sustained ATP production needed for resistance and strenuous exercise. In Homo sapiens (Human), this protein is Calcium uptake protein 1, mitochondrial.